The following is a 147-amino-acid chain: Mid1-interacting protein 1-B (147 aa).

It belongs to the SPOT14 family.

It localises to the nucleus. The protein localises to the cytoplasm. It is found in the cytoskeleton. Involved in stabilization of microtubules. May play a role in the regulation of lipogenesis. This is Mid1-interacting protein 1-B from Danio rerio (Zebrafish).